Consider the following 699-residue polypeptide: Elongation factor G (699 aa).

Residues 8–288 (EDYRNFGIMA…AVVDYLPSPL (281 aa)) form the tr-type G domain. Residues 17 to 24 (AHIDAGKT), 86 to 90 (DTPGH), and 140 to 143 (NKMD) each bind GTP.

It belongs to the TRAFAC class translation factor GTPase superfamily. Classic translation factor GTPase family. EF-G/EF-2 subfamily.

It is found in the cytoplasm. Its function is as follows. Catalyzes the GTP-dependent ribosomal translocation step during translation elongation. During this step, the ribosome changes from the pre-translocational (PRE) to the post-translocational (POST) state as the newly formed A-site-bound peptidyl-tRNA and P-site-bound deacylated tRNA move to the P and E sites, respectively. Catalyzes the coordinated movement of the two tRNA molecules, the mRNA and conformational changes in the ribosome. The chain is Elongation factor G from Agrobacterium fabrum (strain C58 / ATCC 33970) (Agrobacterium tumefaciens (strain C58)).